The chain runs to 169 residues: uncharacterized protein (169 aa).

Over residues 144-157 (AEAHSASPASSDSS) the composition is skewed to low complexity. The segment at 144 to 169 (AEAHSASPASSDSSPLTNNIRPISIM) is disordered. Polar residues predominate over residues 158–169 (PLTNNIRPISIM).

This is an uncharacterized protein from Saccharomyces cerevisiae (strain ATCC 204508 / S288c) (Baker's yeast).